A 253-amino-acid chain; its full sequence is Imidazole glycerol phosphate synthase subunit HisF (253 aa).

Residues D11 and D130 contribute to the active site.

This sequence belongs to the HisA/HisF family. Heterodimer of HisH and HisF.

Its subcellular location is the cytoplasm. It catalyses the reaction 5-[(5-phospho-1-deoxy-D-ribulos-1-ylimino)methylamino]-1-(5-phospho-beta-D-ribosyl)imidazole-4-carboxamide + L-glutamine = D-erythro-1-(imidazol-4-yl)glycerol 3-phosphate + 5-amino-1-(5-phospho-beta-D-ribosyl)imidazole-4-carboxamide + L-glutamate + H(+). It functions in the pathway amino-acid biosynthesis; L-histidine biosynthesis; L-histidine from 5-phospho-alpha-D-ribose 1-diphosphate: step 5/9. IGPS catalyzes the conversion of PRFAR and glutamine to IGP, AICAR and glutamate. The HisF subunit catalyzes the cyclization activity that produces IGP and AICAR from PRFAR using the ammonia provided by the HisH subunit. The chain is Imidazole glycerol phosphate synthase subunit HisF from Ruegeria sp. (strain TM1040) (Silicibacter sp.).